A 368-amino-acid polypeptide reads, in one-letter code: Protein mab-21-like (368 aa).

This sequence belongs to the mab-21 family.

The polypeptide is Protein mab-21-like (Drosophila melanogaster (Fruit fly)).